Consider the following 220-residue polypeptide: MQKEITINYNEYTIGGIKGTFFGNSQYEANYRAKINGFIIDFFKIPISLKKKYELNIKALSDPNFSSTNIAMNCINTFKLIVDIVNMQTGENYDYDTFITKTDTEKMLKYGTKIIAALARHFDEQNKTNFNESYYEWEKGWIDKKWINYEPTAEEIKEIQIMNQKLNPLKLKHRKKNLNNGQIRLLQAINKIEDQSQQQATKSNSKTKKLKGNHGEKTKI.

The segment at 194-220 is disordered; the sequence is DQSQQQATKSNSKTKKLKGNHGEKTKI. Over residues 195–204 the composition is skewed to polar residues; the sequence is QSQQQATKSN.

This is an uncharacterized protein from Borreliella burgdorferi (strain ATCC 35210 / DSM 4680 / CIP 102532 / B31) (Borrelia burgdorferi).